A 117-amino-acid polypeptide reads, in one-letter code: UPF0342 protein BcerKBAB4_0767 (117 aa).

It belongs to the UPF0342 family.

This is UPF0342 protein BcerKBAB4_0767 from Bacillus mycoides (strain KBAB4) (Bacillus weihenstephanensis).